A 113-amino-acid chain; its full sequence is Ig heavy chain V-III region T957 (113 aa).

One can recognise an Ig-like domain in the interval 1 to 113; the sequence is EVKLEESGGG…YWGQGTLVTV (113 aa). Cysteine 22 and cysteine 98 are joined by a disulfide.

The chain is Ig heavy chain V-III region T957 from Mus musculus (Mouse).